Reading from the N-terminus, the 196-residue chain is IVGKSYSCTDCGRSFYAKGHLLNHQKNHGGEKRFTCTECGKIFTRKSNLRKHQRIHTGDNLFTCTECGKRFTEKRNLLIHQRIHTGEKPFTCTECGKSFNLWSTLRNHHKIHTGEKPFTCPECGKKFSVKNSLRKHQRTHARKKLFTCTECGKTFTKKSTFHMHQSTHTGEKPFTCTECGKSFAKNGNLRIHQMTH.

7 consecutive C2H2-type zinc fingers follow at residues 6-28 (YSCTDCGRSFYAKGHLLNHQKNH), 34-56 (FTCTECGKIFTRKSNLRKHQRIH), 62-84 (FTCTECGKRFTEKRNLLIHQRIH), 90-112 (FTCTECGKSFNLWSTLRNHHKIH), 118-140 (FTCPECGKKFSVKNSLRKHQRTH), 146-168 (FTCTECGKTFTKKSTFHMHQSTH), and 174-196 (FTCTECGKSFAKNGNLRIHQMTH).

This sequence belongs to the krueppel C2H2-type zinc-finger protein family.

Its subcellular location is the nucleus. Its function is as follows. May be involved in transcriptional regulation. This is Oocyte zinc finger protein XlCOF26 from Xenopus laevis (African clawed frog).